Reading from the N-terminus, the 781-residue chain is uncharacterized protein (781 aa).

Positions 1–34 (MNIAEEPSDEVISSGPEDTDICSQQTSASAEAGD) are disordered. Residue Ser29 is modified to Phosphoserine. 2 consecutive RRM domains span residues 195–273 (GNIF…YHVE) and 295–418 (RCLF…KAVQ). The tract at residues 345-375 (SNTRSSSSVSFNEEGSVESNKSSNNTNGNAQ) is disordered. Residues 347–364 (TRSSSSVSFNEEGSVESN) show a composition bias toward low complexity. The span at 365 to 374 (KSSNNTNGNA) shows a compositional bias: polar residues. A phosphoserine mark is found at Ser433, Ser435, Ser482, and Ser485. Thr486 is subject to Phosphothreonine. Phosphoserine is present on Ser501. Positions 540–638 (SNLYVKHIPL…QVLSVSFAQK (99 aa)) constitute an RRM 3 domain. The segment at 640–668 (GNLSSSDDDDQSQTDNSSKFQNFQPHNDY) is disordered.

As to quaternary structure, interacts with RBG1.

This is an uncharacterized protein from Saccharomyces cerevisiae (strain ATCC 204508 / S288c) (Baker's yeast).